We begin with the raw amino-acid sequence, 492 residues long: WD repeat-containing protein JIP5 (492 aa).

WD repeat units follow at residues 127-166 (RHKG…VVKK), 178-217 (KKND…LSNS), 236-274 (RSAY…ILIS), 276-317 (DQED…LEDQ), and 365-405 (RNHS…VEEN). Acidic residues-rich tracts occupy residues 404-414 (ENASVESDSDE) and 422-433 (DLSDDTSSDDET). Positions 404–472 (ENASVESDSD…SKSVKKRKIM (69 aa)) are disordered. Over residues 449–462 (KDLKEDHQEEKESN) the composition is skewed to basic and acidic residues.

Interacts with BUD27 and GIS1.

It is found in the nucleus. The protein localises to the nucleolus. The chain is WD repeat-containing protein JIP5 (JIP5) from Saccharomyces cerevisiae (strain ATCC 204508 / S288c) (Baker's yeast).